A 352-amino-acid chain; its full sequence is Quinolinate synthase (352 aa).

Iminosuccinate contacts are provided by H48 and S69. Residue C114 participates in [4Fe-4S] cluster binding. Residues 140–142 (YAN) and S157 each bind iminosuccinate. C201 lines the [4Fe-4S] cluster pocket. Residues 227–229 (HPE) and T244 contribute to the iminosuccinate site. C298 provides a ligand contact to [4Fe-4S] cluster.

This sequence belongs to the quinolinate synthase family. Type 1 subfamily. It depends on [4Fe-4S] cluster as a cofactor.

The protein resides in the cytoplasm. The catalysed reaction is iminosuccinate + dihydroxyacetone phosphate = quinolinate + phosphate + 2 H2O + H(+). It functions in the pathway cofactor biosynthesis; NAD(+) biosynthesis; quinolinate from iminoaspartate: step 1/1. Its function is as follows. Catalyzes the condensation of iminoaspartate with dihydroxyacetone phosphate to form quinolinate. The polypeptide is Quinolinate synthase (Pseudomonas syringae pv. syringae (strain B728a)).